The primary structure comprises 331 residues: MVRIAINGFGRIGRLVLRIALSRKNIEVVAINDPFITVDYAAYMFKYDSTHGRFDGEVSHDGKALIIDGKKVLVFQERDPATLPWGAEKIDIAIDSTGIFKELDSAQKHIDAGAKKVVITAPSSTAPMFVVGVNEDKYAGQTIVSNASCTTNCLAPLAKIINNAFGIEEGLMTTVHSITATQKTVDGPSHKDWRGGRTASGNIIPSSTGAAKAVGKVLPELQGKLTGMAFRVPTVDVSVVDLTVKLAKPATYEEIKAVVKKASENELKGVMGYTEDAVVSSDFLGDTHSSIFDAAAGIQLSPQFVKLVSWYDNEFGYSTRVVDLVELVAKN.

NAD(+) is bound by residues 11–12 (RI), aspartate 33, and glutamate 77. Serine 148 is modified (phosphoserine). D-glyceraldehyde 3-phosphate is bound at residue 148-150 (SCT). Cysteine 149 acts as the Nucleophile in catalysis. Serine 177 carries the phosphoserine modification. Threonine 179 is a binding site for D-glyceraldehyde 3-phosphate. Residue serine 200 is modified to Phosphoserine. D-glyceraldehyde 3-phosphate is bound by residues 208–209 (TG) and arginine 231. Asparagine 313 is an NAD(+) binding site.

Belongs to the glyceraldehyde-3-phosphate dehydrogenase family. Homotetramer.

The protein resides in the cytoplasm. It carries out the reaction D-glyceraldehyde 3-phosphate + phosphate + NAD(+) = (2R)-3-phospho-glyceroyl phosphate + NADH + H(+). It functions in the pathway carbohydrate degradation; glycolysis; pyruvate from D-glyceraldehyde 3-phosphate: step 1/5. The sequence is that of Glyceraldehyde-3-phosphate dehydrogenase 3 from Kluyveromyces marxianus (Yeast).